We begin with the raw amino-acid sequence, 421 residues long: Ribulose bisphosphate carboxylase large chain (421 aa).

Residues asparagine 68 and threonine 118 each contribute to the substrate site. The active-site Proton acceptor is the lysine 120. Position 122 (lysine 122) interacts with substrate. Mg(2+) is bound by residues lysine 146, aspartate 148, and glutamate 149. An N6-carboxylysine modification is found at lysine 146. Histidine 239 (proton acceptor) is an active-site residue. The substrate site is built by arginine 240, histidine 272, and serine 324.

This sequence belongs to the RuBisCO large chain family. Type I subfamily. Heterohexadecamer of 8 large chains and 8 small chains; disulfide-linked. The disulfide link is formed within the large subunit homodimers. Mg(2+) is required as a cofactor. Post-translationally, the disulfide bond which can form in the large chain dimeric partners within the hexadecamer appears to be associated with oxidative stress and protein turnover.

The protein resides in the plastid. It localises to the chloroplast. It carries out the reaction 2 (2R)-3-phosphoglycerate + 2 H(+) = D-ribulose 1,5-bisphosphate + CO2 + H2O. It catalyses the reaction D-ribulose 1,5-bisphosphate + O2 = 2-phosphoglycolate + (2R)-3-phosphoglycerate + 2 H(+). Its function is as follows. RuBisCO catalyzes two reactions: the carboxylation of D-ribulose 1,5-bisphosphate, the primary event in carbon dioxide fixation, as well as the oxidative fragmentation of the pentose substrate in the photorespiration process. Both reactions occur simultaneously and in competition at the same active site. The protein is Ribulose bisphosphate carboxylase large chain (rbcL) of Aegilops tauschii (Tausch's goatgrass).